Here is a 321-residue protein sequence, read N- to C-terminus: Homoserine O-acetyltransferase (321 aa).

Cys-142 functions as the Acyl-thioester intermediate in the catalytic mechanism. Substrate-binding residues include Lys-163 and Ser-192. His-235 functions as the Proton acceptor in the catalytic mechanism. Glu-237 is a catalytic residue. Arg-249 is a binding site for substrate.

It belongs to the MetA family.

The protein localises to the cytoplasm. The enzyme catalyses L-homoserine + acetyl-CoA = O-acetyl-L-homoserine + CoA. Its pathway is amino-acid biosynthesis; L-methionine biosynthesis via de novo pathway; O-acetyl-L-homoserine from L-homoserine: step 1/1. Transfers an acetyl group from acetyl-CoA to L-homoserine, forming acetyl-L-homoserine. This Lactococcus lactis subsp. lactis (strain IL1403) (Streptococcus lactis) protein is Homoserine O-acetyltransferase.